Consider the following 146-residue polypeptide: Large ribosomal subunit protein uL15 (146 aa).

The segment at 1–64 (MELNSIKPAA…MPMHRRLPKR (64 aa)) is disordered. Residues 30–39 (TATKGHKGQK) are compositionally biased toward basic residues.

This sequence belongs to the universal ribosomal protein uL15 family. In terms of assembly, part of the 50S ribosomal subunit.

Binds to the 23S rRNA. This Geotalea daltonii (strain DSM 22248 / JCM 15807 / FRC-32) (Geobacter daltonii) protein is Large ribosomal subunit protein uL15.